Consider the following 345-residue polypeptide: HTH-type transcriptional regulator reg1 (345 aa).

Positions 1–58 (MTTRLADIAAQAGVSEATVSRVLNGKPGVAATTRQSVLAALDVLGYERPVRLRRRSAG) constitute an HTH lacI-type domain. A DNA-binding region (H-T-H motif) is located at residues 5–24 (LADIAAQAGVSEATVSRVLN).

In terms of biological role, transcription repressor involved in control of expression of alpha-amylase and chitinase genes and of actinorhodin production. The protein is HTH-type transcriptional regulator reg1 (reg1) of Streptomyces lividans.